The following is a 420-amino-acid chain: Glutamyl-tRNA reductase (420 aa).

Residues 49-52, serine 109, 114-116, and glutamine 120 contribute to the substrate site; these read TCNR and EPQ. The active-site Nucleophile is the cysteine 50. 189–194 provides a ligand contact to NADP(+); the sequence is GAGETI.

This sequence belongs to the glutamyl-tRNA reductase family. Homodimer.

The catalysed reaction is (S)-4-amino-5-oxopentanoate + tRNA(Glu) + NADP(+) = L-glutamyl-tRNA(Glu) + NADPH + H(+). It functions in the pathway porphyrin-containing compound metabolism; protoporphyrin-IX biosynthesis; 5-aminolevulinate from L-glutamyl-tRNA(Glu): step 1/2. Functionally, catalyzes the NADPH-dependent reduction of glutamyl-tRNA(Glu) to glutamate 1-semialdehyde (GSA). The chain is Glutamyl-tRNA reductase from Proteus mirabilis (strain HI4320).